The following is a 404-amino-acid chain: Retrotransposable element SLACS 45 kDa protein (404 aa).

2 stretches are compositionally biased toward polar residues: residues 1–11 (MVRNLRSSEPQ) and 29–41 (PALNLQWPGQKQV). 5 disordered regions span residues 1 to 62 (MVRN…NTSI), 86 to 111 (KKAAHSPLKTKPVNKEGNRKKYGRPP), 134 to 251 (LGKG…KKGA), 317 to 341 (CRQQHPGGPPDSLHPDNNRESGAVS), and 369 to 404 (PKLPVPEQGDYPNARSGIGTGAPHSPHHCDRSAGPP). A compositionally biased stretch (basic and acidic residues) spans 98 to 111 (VNKEGNRKKYGRPP). Over residues 141–151 (TAHTKSNQSRV) the composition is skewed to polar residues. A C2H2-type zinc finger spans residues 300–321 (CPVCGFAHPEETITVTHCRQQH). The segment covering 395-404 (HHCDRSAGPP) has biased composition (basic and acidic residues).

The protein is Retrotransposable element SLACS 45 kDa protein of Trypanosoma brucei gambiense.